The sequence spans 215 residues: 3-isopropylmalate dehydratase small subunit (215 aa).

This sequence belongs to the LeuD family. LeuD type 1 subfamily. As to quaternary structure, heterodimer of LeuC and LeuD.

The catalysed reaction is (2R,3S)-3-isopropylmalate = (2S)-2-isopropylmalate. Its pathway is amino-acid biosynthesis; L-leucine biosynthesis; L-leucine from 3-methyl-2-oxobutanoate: step 2/4. Functionally, catalyzes the isomerization between 2-isopropylmalate and 3-isopropylmalate, via the formation of 2-isopropylmaleate. This Saccharophagus degradans (strain 2-40 / ATCC 43961 / DSM 17024) protein is 3-isopropylmalate dehydratase small subunit.